A 434-amino-acid polypeptide reads, in one-letter code: Chaperone SurA (434 aa).

The signal sequence occupies residues 1-29 (MKTLRLNFRSAILKALGALLLLQGCLAHA). PpiC domains follow at residues 180-281 (AEEY…AMLE) and 290-389 (VEQS…QVQD).

It localises to the periplasm. It catalyses the reaction [protein]-peptidylproline (omega=180) = [protein]-peptidylproline (omega=0). Functionally, chaperone involved in the correct folding and assembly of outer membrane proteins. Recognizes specific patterns of aromatic residues and the orientation of their side chains, which are found more frequently in integral outer membrane proteins. May act in both early periplasmic and late outer membrane-associated steps of protein maturation. The sequence is that of Chaperone SurA from Hahella chejuensis (strain KCTC 2396).